We begin with the raw amino-acid sequence, 346 residues long: MENTDHTNNEHRLTQLLSIAEECETLDRLKQLVDSGRIFTAYNGFEPSGRIHIAQALITVMNTNNIIECGGQMIIYIADWFAKMNLKMNGDINKIRELGRYFIEVFKACGINLDGTRFIWASEFIASNPSYIERMLDIAEFSTISRVKRCCQIMGRNESDCLKASQIFYPCMQAADVFELVPEGIDICQLGIDQRKVNMLAIEYANDRGLKIPISLSHHMLMSLSGPKKKMSKSDPQGAIFMDDTEQEVSEKISRAYCTDETFDNPIFEYIKYLLLRWFGTLNLCGKIYTDIESIQEDFSSMNKRELKTDVANYINTIIDLVREHFKKPELSELLSNVKSYQQPSK.

Positions 47–56 (PSGRIHIAQA) match the 'HIGH' region motif. Residues 230–234 (KMSKS) carry the 'KMSKS' region motif. ATP is bound at residue lysine 233.

It belongs to the class-I aminoacyl-tRNA synthetase family. In terms of assembly, homodimer.

It carries out the reaction tRNA(Tyr) + L-tyrosine + ATP = L-tyrosyl-tRNA(Tyr) + AMP + diphosphate + H(+). Its function is as follows. Catalyzes the attachment of tyrosine to tRNA(Tyr) in a two-step reaction: tyrosine is first activated by ATP to form Tyr-AMP and then transferred to the acceptor end of tRNA(Tyr). This is Tyrosine--tRNA ligase (YARS) from Acanthamoeba polyphaga (Amoeba).